Consider the following 424-residue polypeptide: Poly-cysteine and histidine-tailed protein (424 aa).

The signal sequence occupies residues 1 to 17 (MAFSTIVVLFVAAVGFG). N291 carries N-linked (GlcNAc...) asparagine glycosylation. Over residues 372 to 390 (VGGKKQQKDQPESEKKAEN) the composition is skewed to basic and acidic residues. The segment at 372–424 (VGGKKQQKDQPESEKKAENMPETTGNASHHQHRHHHGDSSSESHEQHHHHHHH) is disordered. N397 carries an N-linked (GlcNAc...) asparagine glycan.

Glycosylated. In terms of tissue distribution, expressed in larval tissues like cuticle, hypodermis and muscle (at protein level). Note=Not excreted into striated muscle fibers or nurse cell.

The protein localises to the secreted. Binds iron and zinc. May bind nickel. This Trichinella spiralis (Trichina worm) protein is Poly-cysteine and histidine-tailed protein.